Here is a 394-residue protein sequence, read N- to C-terminus: MVEADRPGKLFIGGLNLETDEKALEAEFGKYGRIVEVLLMKDRETNKSRGFAFVTFESPANAKAAARDMNGKSLDGKAIKVAQATKPAFESSRRGPPPPRSRGRPRFLRGTRGGGGGPRRSPSRGGPDDDGGYAGDFDLRPSRAPMPMKRGPPPPPRRAGPPPKRAAPSGPARSSGGGMRGRALAVRGRDGYSGPPRREPPPPRRDPYLGPRDEGYSSRDGYSSRDYREPRGFAPSPREYTHREYGHSSVRDDCPLRGYGDRDGYGCRDRDYGDHPSRGSYREPFESYGDLRGGAPGRGTPPSYGGGGRYEEYRGCSPDAYSGGRDSYSSSYGRSDRYSRGRDRVGRPDRGLSLSMERGCPPQRDSYSRSGCRVPRGGGRLGGRMERGGGRSRY.

One can recognise an RRM domain in the interval 8-86; that stretch reads GKLFIGGLNL…KAIKVAQATK (79 aa). Residues 67–78 are compositionally biased toward basic and acidic residues; it reads RDMNGKSLDGKA. Residues 67–394 form a disordered region; sequence RDMNGKSLDG…MERGGGRSRY (328 aa). Residues 150–165 are compositionally biased toward pro residues; the sequence is RGPPPPPRRAGPPPKR. Composition is skewed to basic and acidic residues over residues 196–231 and 239–285; these read PRRE…REPR and EYTH…REPF. Low complexity predominate over residues 321-333; it reads YSGGRDSYSSSYG. 2 stretches are compositionally biased toward basic and acidic residues: residues 334–350 and 383–394; these read RSDR…RPDR and GRMERGGGRSRY.

The protein resides in the nucleus. The protein is RNA-binding motif protein, X-linked-like-2 (RBMXL2) of Macaca fascicularis (Crab-eating macaque).